We begin with the raw amino-acid sequence, 473 residues long: Ribulose bisphosphate carboxylase large chain 1 (473 aa).

Asparagine 116 and threonine 166 together coordinate substrate. The Proton acceptor role is filled by lysine 168. Substrate is bound at residue lysine 170. 3 residues coordinate Mg(2+): lysine 194, aspartate 196, and glutamate 197. Residue lysine 194 is modified to N6-carboxylysine. Histidine 287 (proton acceptor) is an active-site residue. Residues arginine 288, histidine 320, and serine 372 each contribute to the substrate site.

This sequence belongs to the RuBisCO large chain family. Type I subfamily. As to quaternary structure, heterohexadecamer of 8 large chains and 8 small chains. The cofactor is Mg(2+).

The enzyme catalyses 2 (2R)-3-phosphoglycerate + 2 H(+) = D-ribulose 1,5-bisphosphate + CO2 + H2O. It catalyses the reaction D-ribulose 1,5-bisphosphate + O2 = 2-phosphoglycolate + (2R)-3-phosphoglycerate + 2 H(+). Its function is as follows. RuBisCO catalyzes two reactions: the carboxylation of D-ribulose 1,5-bisphosphate, the primary event in carbon dioxide fixation, as well as the oxidative fragmentation of the pentose substrate. Both reactions occur simultaneously and in competition at the same active site. The protein is Ribulose bisphosphate carboxylase large chain 1 of Acidithiobacillus ferrooxidans (Thiobacillus ferrooxidans).